A 176-amino-acid polypeptide reads, in one-letter code: Calcineurin subunit B type 2 (176 aa).

G2 carries N-myristoyl glycine lipidation. EF-hand domains lie at D18–P53, R57–K85, D87–N122, and Q128–H163. D31, D33, S35, S37, E42, D63, D65, N67, E69, E74, D100, D102, D104, and E111 together coordinate Ca(2+). The segment at Q131 to S136 is calcineurin A binding. Residues D141, D143, D145, R147, and E152 each coordinate Ca(2+).

Belongs to the calcineurin regulatory subunit family. Forms a complex composed of a calmodulin-dependent catalytic subunit (also known as calcineurin A) and a regulatory Ca(2+)-binding subunit (also known as calcineurin B). There are three catalytic subunits, each encoded by a separate gene (PPP3CA, PPP3CB, and PPP3CC) and two regulatory subunits which are also encoded by separate genes (PPP3R1 and PPP3R2). Interacts with SPATA33 (via PQIIIT motif). As to expression, testis specific.

It localises to the mitochondrion. In terms of biological role, regulatory subunit of calcineurin, a calcium-dependent, calmodulin stimulated protein phosphatase. Confers calcium sensitivity. The polypeptide is Calcineurin subunit B type 2 (Ppp3r2) (Rattus norvegicus (Rat)).